Reading from the N-terminus, the 320-residue chain is Mycothiol acetyltransferase (320 aa).

N-acetyltransferase domains follow at residues 16–141 and 152–320; these read RQVR…RSLR and LQIR…AALA. Glu-36 contributes to the 1D-myo-inositol 2-(L-cysteinylamino)-2-deoxy-alpha-D-glucopyranoside binding site. Acetyl-CoA is bound by residues 80–82 and 88–93; these read LVV and RRGIAT. 1D-myo-inositol 2-(L-cysteinylamino)-2-deoxy-alpha-D-glucopyranoside is bound by residues Glu-179, Lys-229, and Glu-239. Residues 243–245 and 250–256 contribute to the acetyl-CoA site; these read LGV and QGRGLGR. A 1D-myo-inositol 2-(L-cysteinylamino)-2-deoxy-alpha-D-glucopyranoside-binding site is contributed by Tyr-284. 289–294 contributes to the acetyl-CoA binding site; it reads NIAAVR.

This sequence belongs to the acetyltransferase family. MshD subfamily. Monomer.

The enzyme catalyses 1D-myo-inositol 2-(L-cysteinylamino)-2-deoxy-alpha-D-glucopyranoside + acetyl-CoA = mycothiol + CoA + H(+). Its function is as follows. Catalyzes the transfer of acetyl from acetyl-CoA to desacetylmycothiol (Cys-GlcN-Ins) to form mycothiol. This is Mycothiol acetyltransferase from Mycobacterium marinum (strain ATCC BAA-535 / M).